Here is an 86-residue protein sequence, read N- to C-terminus: Small ribosomal subunit protein bS20 (86 aa).

Belongs to the bacterial ribosomal protein bS20 family.

Its function is as follows. Binds directly to 16S ribosomal RNA. This is Small ribosomal subunit protein bS20 from Pseudarthrobacter chlorophenolicus (strain ATCC 700700 / DSM 12829 / CIP 107037 / JCM 12360 / KCTC 9906 / NCIMB 13794 / A6) (Arthrobacter chlorophenolicus).